Consider the following 56-residue polypeptide: Conotoxin reg3.9 (56 aa).

The signal sequence occupies residues 1–8 (LLFPLSAL). The disordered stretch occupies residues 1-22 (LLFPLSALPLDGDQPADQPAER). Positions 9-40 (PLDGDQPADQPAERMQDISPEQNFWFDLVERG) are excised as a propeptide. 3 cysteine pairs are disulfide-bonded: Cys-41-Cys-55, Cys-42-Cys-53, and Cys-47-Cys-56.

Belongs to the conotoxin M superfamily. As to expression, expressed by the venom duct.

The protein localises to the secreted. This Conus regius (Crown cone) protein is Conotoxin reg3.9.